The following is a 150-amino-acid chain: D-aminoacyl-tRNA deacylase (150 aa).

The Gly-cisPro motif, important for rejection of L-amino acids signature appears at 137-138 (GP).

Belongs to the DTD family. As to quaternary structure, homodimer.

The protein localises to the cytoplasm. The enzyme catalyses glycyl-tRNA(Ala) + H2O = tRNA(Ala) + glycine + H(+). It catalyses the reaction a D-aminoacyl-tRNA + H2O = a tRNA + a D-alpha-amino acid + H(+). An aminoacyl-tRNA editing enzyme that deacylates mischarged D-aminoacyl-tRNAs. Also deacylates mischarged glycyl-tRNA(Ala), protecting cells against glycine mischarging by AlaRS. Acts via tRNA-based rather than protein-based catalysis; rejects L-amino acids rather than detecting D-amino acids in the active site. By recycling D-aminoacyl-tRNA to D-amino acids and free tRNA molecules, this enzyme counteracts the toxicity associated with the formation of D-aminoacyl-tRNA entities in vivo and helps enforce protein L-homochirality. The polypeptide is D-aminoacyl-tRNA deacylase (Listeria monocytogenes serotype 4b (strain CLIP80459)).